We begin with the raw amino-acid sequence, 48 residues long: Large ribosomal subunit protein bL33B (48 aa).

This sequence belongs to the bacterial ribosomal protein bL33 family.

The chain is Large ribosomal subunit protein bL33B (rpmG2) from Mycoplasma genitalium (strain ATCC 33530 / DSM 19775 / NCTC 10195 / G37) (Mycoplasmoides genitalium).